We begin with the raw amino-acid sequence, 159 residues long: Putative viral CXC chemokine 2 (159 aa).

Cystine bridges form between C50-C77 and C52-C93.

The protein belongs to the intercrine alpha (chemokine CxC) family.

In Human cytomegalovirus (strain Towne) (HHV-5), this protein is Putative viral CXC chemokine 2 (UL147).